The chain runs to 172 residues: Large ribosomal subunit protein uL10 (172 aa).

The protein belongs to the universal ribosomal protein uL10 family. As to quaternary structure, part of the ribosomal stalk of the 50S ribosomal subunit. The N-terminus interacts with L11 and the large rRNA to form the base of the stalk. The C-terminus forms an elongated spine to which L12 dimers bind in a sequential fashion forming a multimeric L10(L12)X complex.

Forms part of the ribosomal stalk, playing a central role in the interaction of the ribosome with GTP-bound translation factors. The protein is Large ribosomal subunit protein uL10 of Chlorobium phaeovibrioides (strain DSM 265 / 1930) (Prosthecochloris vibrioformis (strain DSM 265)).